We begin with the raw amino-acid sequence, 86 residues long: Cell division protein ZapA (86 aa).

The protein belongs to the ZapA family. Type 2 subfamily. In terms of assembly, homodimer. Interacts with FtsZ.

It localises to the cytoplasm. In terms of biological role, activator of cell division through the inhibition of FtsZ GTPase activity, therefore promoting FtsZ assembly into bundles of protofilaments necessary for the formation of the division Z ring. It is recruited early at mid-cell but it is not essential for cell division. The protein is Cell division protein ZapA of Oceanobacillus iheyensis (strain DSM 14371 / CIP 107618 / JCM 11309 / KCTC 3954 / HTE831).